The following is a 603-amino-acid chain: Myotubularin (603 aa).

Residues serine 13 and serine 18 each carry the phosphoserine modification. Residues 29–97 (QDVSETVPRL…GVISRIEKMG (69 aa)) enclose the GRAM domain. In terms of domain architecture, Myotubularin phosphatase spans 163 to 538 (GWTVYNPVEE…RHLELWVNYY (376 aa)). A 1,2-diacyl-sn-glycero-3-phospho-(1D-myo-inositol-3,5-bisphosphate)-binding residues include asparagine 288, asparagine 313, and isoleucine 314. A 1,2-diacyl-sn-glycero-3-phospho-(1D-myo-inositol-3-phosphate) is bound by residues asparagine 288, asparagine 313, and isoleucine 314. Cysteine 375 serves as the catalytic Phosphocysteine intermediate. A 1,2-diacyl-sn-glycero-3-phospho-(1D-myo-inositol-3,5-bisphosphate)-binding residues include serine 376, aspartate 377, glycine 378, tryptophan 379, aspartate 380, arginine 381, lysine 417, and arginine 421. A 1,2-diacyl-sn-glycero-3-phospho-(1D-myo-inositol-3-phosphate) is bound by residues serine 376, aspartate 377, glycine 378, tryptophan 379, aspartate 380, and arginine 381. Arginine 421 lines the a 1,2-diacyl-sn-glycero-3-phospho-(1D-myo-inositol-3-phosphate) pocket. Position 495 is a phosphothreonine (threonine 495). Serine 588 is modified (phosphoserine).

The protein belongs to the protein-tyrosine phosphatase family. Non-receptor class myotubularin subfamily. Heterodimer with MTMR12. Interacts with KMT2A/MLL1 (via SET domain). Interacts with DES in skeletal muscle but not in cardiac muscle. Interacts with SPEG. As to expression, widely expressed with highest levels detected in heart and muscle and low levels in brain (at protein level). Expressed in skeletal muscles (at protein level).

The protein resides in the cytoplasm. The protein localises to the cell membrane. It is found in the cell projection. Its subcellular location is the filopodium. It localises to the ruffle. The protein resides in the late endosome. The protein localises to the myofibril. It is found in the sarcomere. It catalyses the reaction a 1,2-diacyl-sn-glycero-3-phospho-(1D-myo-inositol-3-phosphate) + H2O = a 1,2-diacyl-sn-glycero-3-phospho-(1D-myo-inositol) + phosphate. It carries out the reaction a 1,2-diacyl-sn-glycero-3-phospho-(1D-myo-inositol-3,5-bisphosphate) + H2O = a 1,2-diacyl-sn-glycero-3-phospho-(1D-myo-inositol-5-phosphate) + phosphate. The enzyme catalyses 1,2-dioctanoyl-sn-glycero-3-phospho-(1-D-myo-inositol-3-phosphate) + H2O = 1,2-dioctanoyl-sn-glycero-3-phospho-(1D-myo-inositol) + phosphate. The catalysed reaction is 1,2-dioctanoyl-sn-glycero-3-phospho-(1D-myo-inositol-3,5-bisphosphate) + H2O = 1,2-dioctanoyl-sn-glycero-3-phospho-(1D-myo-inositol-5-phosphate) + phosphate. It catalyses the reaction 1,2-dihexadecanoyl-sn-glycero-3-phospho-(1D-myo-inositol-3,5-phosphate) + H2O = 1,2-dihexadecanoyl-sn-glycero-3-phospho-(1D-myo-inositol-5-phosphate) + phosphate. Its activity is regulated as follows. Allosterically activated by phosphatidylinositol 5-phosphate (PI5P). Lipid phosphatase which dephosphorylates phosphatidylinositol 3-monophosphate (PI3P) and phosphatidylinositol 3,5-bisphosphate (PI(3,5)P2). Has also been shown to dephosphorylate phosphotyrosine- and phosphoserine-containing peptides. Negatively regulates EGFR degradation through regulation of EGFR trafficking from the late endosome to the lysosome. Plays a role in vacuolar formation and morphology. Regulates desmin intermediate filament assembly and architecture. Plays a role in mitochondrial morphology and positioning. Required for skeletal muscle maintenance but not for myogenesis. In skeletal muscles, stabilizes MTMR12 protein levels. In Mus musculus (Mouse), this protein is Myotubularin.